The sequence spans 435 residues: ATP-dependent protease ATPase subunit HslU (435 aa).

ATP-binding positions include Ile18, 60 to 65, Asp248, Glu313, and Arg385; that span reads GVGKTE.

This sequence belongs to the ClpX chaperone family. HslU subfamily. A double ring-shaped homohexamer of HslV is capped on each side by a ring-shaped HslU homohexamer. The assembly of the HslU/HslV complex is dependent on binding of ATP.

Its subcellular location is the cytoplasm. Functionally, ATPase subunit of a proteasome-like degradation complex; this subunit has chaperone activity. The binding of ATP and its subsequent hydrolysis by HslU are essential for unfolding of protein substrates subsequently hydrolyzed by HslV. HslU recognizes the N-terminal part of its protein substrates and unfolds these before they are guided to HslV for hydrolysis. This chain is ATP-dependent protease ATPase subunit HslU, found in Rhizobium meliloti (strain 1021) (Ensifer meliloti).